The sequence spans 327 residues: Sugar transporter ERD6-like 9 (327 aa).

The next 8 helical transmembrane spans lie at 26–46, 68–88, 102–122, 125–145, 152–172, 180–200, 260–280, and 295–315; these read FLVFTTFIIVSASFSFGVALG, VFGSLLTFGGMIGALFSATIA, VFCISGWLAIALAKNIIWLDL, FFVGIGVGLLSYVVPVYIAEI, GTFTFSNQLLQNCGVATAYYL, IIALIGILPCLIQLVGLFFVP, LTIGIGLMLLQQLSGSAGLGY, and IGMTVLSIVVVPKAILGLILV.

It belongs to the major facilitator superfamily. Sugar transporter (TC 2.A.1.1) family.

It is found in the membrane. Functionally, sugar transporter. The chain is Sugar transporter ERD6-like 9 from Arabidopsis thaliana (Mouse-ear cress).